A 172-amino-acid polypeptide reads, in one-letter code: dCTP deaminase, dUMP-forming (172 aa).

DCTP-binding positions include 93-98, aspartate 111, 119-121, glutamine 138, and tyrosine 151; these read RSSVGR and TLE. Catalysis depends on glutamate 121, which acts as the Proton donor/acceptor.

This sequence belongs to the dCTP deaminase family. Homotrimer.

It carries out the reaction dCTP + 2 H2O = dUMP + NH4(+) + diphosphate. It participates in pyrimidine metabolism; dUMP biosynthesis; dUMP from dCTP: step 1/1. Functionally, bifunctional enzyme that catalyzes both the deamination of dCTP to dUTP and the hydrolysis of dUTP to dUMP without releasing the toxic dUTP intermediate. The polypeptide is dCTP deaminase, dUMP-forming (Hathewaya histolytica (Clostridium histolyticum)).